The chain runs to 338 residues: Methionine synthase (338 aa).

Zn(2+)-binding residues include His-210, Cys-212, Glu-234, and Cys-294.

It belongs to the archaeal MetE family. Requires Zn(2+) as cofactor.

It functions in the pathway amino-acid biosynthesis; L-methionine biosynthesis via de novo pathway. Catalyzes the transfer of a methyl group to L-homocysteine resulting in methionine formation. The physiological methyl donor is unknown. The polypeptide is Methionine synthase (Pyrococcus abyssi (strain GE5 / Orsay)).